We begin with the raw amino-acid sequence, 72 residues long: Translation initiation factor IF-1 (72 aa).

The S1-like domain occupies 1–72 (MAKEDNIEMQ…SKGRIVFRSR (72 aa)).

The protein belongs to the IF-1 family. As to quaternary structure, component of the 30S ribosomal translation pre-initiation complex which assembles on the 30S ribosome in the order IF-2 and IF-3, IF-1 and N-formylmethionyl-tRNA(fMet); mRNA recruitment can occur at any time during PIC assembly.

The protein resides in the cytoplasm. Its function is as follows. One of the essential components for the initiation of protein synthesis. Stabilizes the binding of IF-2 and IF-3 on the 30S subunit to which N-formylmethionyl-tRNA(fMet) subsequently binds. Helps modulate mRNA selection, yielding the 30S pre-initiation complex (PIC). Upon addition of the 50S ribosomal subunit IF-1, IF-2 and IF-3 are released leaving the mature 70S translation initiation complex. This is Translation initiation factor IF-1 from Shewanella pealeana (strain ATCC 700345 / ANG-SQ1).